A 116-amino-acid polypeptide reads, in one-letter code: Flagellar transcriptional regulator FlhD (116 aa).

Belongs to the FlhD family. As to quaternary structure, homodimer; disulfide-linked. Forms a heterohexamer composed of two FlhC and four FlhD subunits. Each FlhC binds a FlhD dimer, forming a heterotrimer, and a hexamer assembles by dimerization of two heterotrimers.

It localises to the cytoplasm. Functions in complex with FlhC as a master transcriptional regulator that regulates transcription of several flagellar and non-flagellar operons by binding to their promoter region. Activates expression of class 2 flagellar genes, including fliA, which is a flagellum-specific sigma factor that turns on the class 3 genes. Also regulates genes whose products function in a variety of physiological pathways. In Pectobacterium carotovorum subsp. carotovorum (strain PC1), this protein is Flagellar transcriptional regulator FlhD.